The primary structure comprises 454 residues: UDP-N-acetylmuramate--L-alanine ligase (454 aa).

Glycine 112 to threonine 118 lines the ATP pocket.

This sequence belongs to the MurCDEF family.

The protein resides in the cytoplasm. The catalysed reaction is UDP-N-acetyl-alpha-D-muramate + L-alanine + ATP = UDP-N-acetyl-alpha-D-muramoyl-L-alanine + ADP + phosphate + H(+). It participates in cell wall biogenesis; peptidoglycan biosynthesis. Its function is as follows. Cell wall formation. This is UDP-N-acetylmuramate--L-alanine ligase from Oleidesulfovibrio alaskensis (strain ATCC BAA-1058 / DSM 17464 / G20) (Desulfovibrio alaskensis).